A 267-amino-acid chain; its full sequence is Indole-3-glycerol phosphate synthase (267 aa).

This sequence belongs to the TrpC family.

It catalyses the reaction 1-(2-carboxyphenylamino)-1-deoxy-D-ribulose 5-phosphate + H(+) = (1S,2R)-1-C-(indol-3-yl)glycerol 3-phosphate + CO2 + H2O. Its pathway is amino-acid biosynthesis; L-tryptophan biosynthesis; L-tryptophan from chorismate: step 4/5. This Polynucleobacter necessarius subsp. necessarius (strain STIR1) protein is Indole-3-glycerol phosphate synthase.